Consider the following 141-residue polypeptide: Mitochondrial import inner membrane translocase subunit Tim16 (141 aa).

Disordered stretches follow at residues 34–53 and 108–141; these read AARR…SNLR and LDHE…RQRR. The tract at residues 60 to 113 is J-like; the sequence is EAKQILNIDDPKNVDAITKNYEHLFQVNERSKGGSFYIQSKVFRAKERLDHEIK. Over residues 108–118 the composition is skewed to basic and acidic residues; sequence LDHEIKAHEQP.

This sequence belongs to the TIM16/PAM16 family. In terms of assembly, probable component of the PAM complex at least composed of a mitochondrial HSP70 protein, Roe1, TIM44, blp/TIM16 and TIM14. Associates with the TIM23 complex. In terms of tissue distribution, expressed in distinct cells in the embryonic and larval nervous system.

Its subcellular location is the mitochondrion inner membrane. In terms of biological role, regulates ATP-dependent protein translocation into the mitochondrial matrix. Essential for larval development. The polypeptide is Mitochondrial import inner membrane translocase subunit Tim16 (blp) (Drosophila melanogaster (Fruit fly)).